A 166-amino-acid chain; its full sequence is Nucleotide-binding protein Acid_3194 (166 aa).

The protein belongs to the YajQ family.

In terms of biological role, nucleotide-binding protein. The protein is Nucleotide-binding protein Acid_3194 of Solibacter usitatus (strain Ellin6076).